The primary structure comprises 426 residues: Serine--tRNA ligase (426 aa).

231–233 (TLE) is a binding site for L-serine. ATP is bound at residue 262–264 (RSE). Glutamate 285 lines the L-serine pocket. An ATP-binding site is contributed by 349–352 (EISS). Serine 385 is an L-serine binding site.

Belongs to the class-II aminoacyl-tRNA synthetase family. Type-1 seryl-tRNA synthetase subfamily. In terms of assembly, homodimer. The tRNA molecule binds across the dimer.

The protein localises to the cytoplasm. The enzyme catalyses tRNA(Ser) + L-serine + ATP = L-seryl-tRNA(Ser) + AMP + diphosphate + H(+). The catalysed reaction is tRNA(Sec) + L-serine + ATP = L-seryl-tRNA(Sec) + AMP + diphosphate + H(+). It participates in aminoacyl-tRNA biosynthesis; selenocysteinyl-tRNA(Sec) biosynthesis; L-seryl-tRNA(Sec) from L-serine and tRNA(Sec): step 1/1. In terms of biological role, catalyzes the attachment of serine to tRNA(Ser). Is also able to aminoacylate tRNA(Sec) with serine, to form the misacylated tRNA L-seryl-tRNA(Sec), which will be further converted into selenocysteinyl-tRNA(Sec). This chain is Serine--tRNA ligase, found in Malacoplasma penetrans (strain HF-2) (Mycoplasma penetrans).